Consider the following 372-residue polypeptide: Rab9 effector protein with kelch motifs (372 aa).

Kelch repeat units lie at residues 49 to 95 (KVFI…FIPS), 100 to 146 (SIWV…TSSA), 151 to 203 (QLYV…AAGT), 204 to 250 (KLFI…SAVA), and 254 to 303 (HLYV…IIPW). Residues 309 to 341 (SEKEDSNSATVNRDAEKGDSTEKGVTQGGDSQE) form a disordered region. Positions 321-330 (RDAEKGDSTE) are enriched in basic and acidic residues. One copy of the Kelch 6 repeat lies at 349-372 (LCFVFGGMNTEGEIYDDCIVTAVD).

As to quaternary structure, interacts with PIKFYVE; the interaction recruits RABEPK to the endosomal membrane. Interacts with RAB9 in its GTP-bound conformation. Post-translationally, phosphorylated on Ser residues by PIKFYVE.

It localises to the cytoplasm. It is found in the endosome membrane. Its function is as follows. Rab9 effector required for endosome to trans-Golgi network (TGN) transport. The chain is Rab9 effector protein with kelch motifs (RABEPK) from Bos taurus (Bovine).